The sequence spans 172 residues: C-phycocyanin subunit beta (172 aa).

An N4-methylasparagine modification is found at Asn-72. Residues Cys-82 and Cys-153 each coordinate (2R,3E)-phycocyanobilin.

The protein belongs to the phycobiliprotein family. In terms of assembly, heterodimer of an alpha and a beta subunit, which further assembles into trimers and the trimers into hexamers. Contains two covalently linked bilin chromophores. The chromophore on position 82 is added by the phycocyanobilin lyase CpcUS, while the chromophore on position 153 is added by the phycocyanobilin lyase CpcT.

It localises to the cellular thylakoid membrane. Functionally, light-harvesting photosynthetic bile pigment-protein from the phycobiliprotein complex (phycobilisome, PBS). Phycocyanin is the major phycobiliprotein in the PBS rod. This Picosynechococcus sp. (strain ATCC 27264 / PCC 7002 / PR-6) (Agmenellum quadruplicatum) protein is C-phycocyanin subunit beta (cpcB).